Here is a 184-residue protein sequence, read N- to C-terminus: ATP-dependent protease subunit HslV (184 aa).

Threonine 12 is an active-site residue. Alanine 166, cysteine 169, and threonine 172 together coordinate Na(+).

The protein belongs to the peptidase T1B family. HslV subfamily. In terms of assembly, a double ring-shaped homohexamer of HslV is capped on each side by a ring-shaped HslU homohexamer. The assembly of the HslU/HslV complex is dependent on binding of ATP.

It localises to the cytoplasm. The catalysed reaction is ATP-dependent cleavage of peptide bonds with broad specificity.. Allosterically activated by HslU binding. Functionally, protease subunit of a proteasome-like degradation complex believed to be a general protein degrading machinery. This Brucella ovis (strain ATCC 25840 / 63/290 / NCTC 10512) protein is ATP-dependent protease subunit HslV.